A 419-amino-acid chain; its full sequence is G-protein coupled receptor 151 (419 aa).

Over 1 to 41 the chain is Extracellular; that stretch reads MLAAAFADSNSSSMNVSFAHLHFAGGYLPSDSQDWRTIIPA. 2 N-linked (GlcNAc...) asparagine glycosylation sites follow: Asn10 and Asn15. The chain crosses the membrane as a helical span at residues 42–62; the sequence is LLVAVCLVGFVGNLCVIGILL. The Cytoplasmic portion of the chain corresponds to 63–71; the sequence is HNAWKGKPS. A helical transmembrane segment spans residues 72-92; it reads MIHSLILNLSLADLSLLLFSA. Residues 93–116 lie on the Extracellular side of the membrane; that stretch reads PIRATAYSKSVWDLGWFVCKSSDW. Cys111 and Cys187 are oxidised to a cystine. Residues 117-137 form a helical membrane-spanning segment; that stretch reads FIHTCMAAKSLTIVVVAKVCF. The Cytoplasmic segment spans residues 138–153; that stretch reads MYASDPAKQVSIHNYT. The chain crosses the membrane as a helical span at residues 154–174; it reads IWSVLVAIWTVASLLPLPEWF. Over 175–201 the chain is Extracellular; sequence FSTIRHHEGVEMCLVDVPAVAEEFMSM. Residues 202–222 traverse the membrane as a helical segment; it reads FGKLYPLLAFGLPLFFASFYF. Over 223–252 the chain is Cytoplasmic; sequence WRAYDQCKKRGTKTQNLRNQIRSKQVTVML. The helical transmembrane segment at 253–273 threads the bilayer; it reads LSIAIISALLWLPEWVAWLWV. The Extracellular portion of the chain corresponds to 274–286; sequence WHLKAAGPAPPQG. A helical transmembrane segment spans residues 287–307; sequence FIALSQVLMFSISSANPLIFL. At 308–419 the chain is on the cytoplasmic side; it reads VMSEEFREGL…EDQETGEGVK (112 aa). Positions 330-419 are disordered; the sequence is PTVSESQETP…EDQETGEGVK (90 aa). The span at 332-341 shows a compositional bias: polar residues; that stretch reads VSESQETPAG. A compositionally biased stretch (acidic residues) spans 410 to 419; that stretch reads EDQETGEGVK.

Belongs to the G-protein coupled receptor 1 family. In terms of tissue distribution, high expression in the spinal cord.

It is found in the cell membrane. Proton-sensing G-protein coupled receptor. The polypeptide is G-protein coupled receptor 151 (GPR151) (Homo sapiens (Human)).